The primary structure comprises 384 residues: Flap endonuclease 1 (384 aa).

Residues 1–105 (MGIKKLTDLI…GELAKRQARR (105 aa)) are N-domain. Mg(2+) is bound at residue aspartate 34. Residue arginine 71 participates in DNA binding. Residues aspartate 87, glutamate 159, glutamate 161, aspartate 180, and aspartate 182 each coordinate Mg(2+). An I-domain region spans residues 123–254 (EVQKFAKRVI…KRAIELIQKH (132 aa)). Glutamate 159 contacts DNA. Positions 232 and 234 each coordinate DNA. Aspartate 234 lines the Mg(2+) pocket. An interaction with PCNA region spans residues 338–346 (VQSRMDSFI). A disordered region spans residues 349–384 (IKKPEDPNDKKKKVTKTPSKPSAKTSKKSSSTFKRK). Residues 364-384 (KTPSKPSAKTSKKSSSTFKRK) show a composition bias toward low complexity.

It belongs to the XPG/RAD2 endonuclease family. FEN1 subfamily. In terms of assembly, interacts with PCNA. Three molecules of repg bind to one PCNA trimer with each molecule binding to one PCNA monomer. PCNA stimulates the nuclease activity without altering cleavage specificity. Mg(2+) is required as a cofactor. In terms of processing, phosphorylated. Phosphorylation upon DNA damage induces relocalization to the nuclear plasma.

It localises to the nucleus. The protein localises to the nucleolus. Its subcellular location is the nucleoplasm. The protein resides in the mitochondrion. Structure-specific nuclease with 5'-flap endonuclease and 5'-3' exonuclease activities involved in DNA replication and repair. During DNA replication, cleaves the 5'-overhanging flap structure that is generated by displacement synthesis when DNA polymerase encounters the 5'-end of a downstream Okazaki fragment. It enters the flap from the 5'-end and then tracks to cleave the flap base, leaving a nick for ligation. Also involved in the long patch base excision repair (LP-BER) pathway, by cleaving within the apurinic/apyrimidinic (AP) site-terminated flap. Acts as a genome stabilization factor that prevents flaps from equilibrating into structures that lead to duplications and deletions. Also possesses 5'-3' exonuclease activity on nicked or gapped double-stranded DNA, and exhibits RNase H activity. Also involved in replication and repair of rDNA and in repairing mitochondrial DNA. The protein is Flap endonuclease 1 of Dictyostelium discoideum (Social amoeba).